A 448-amino-acid chain; its full sequence is Putative F-box/LRR-repeat protein At3g44810 (448 aa).

An F-box domain is found at 6 to 54; the sequence is TASLNCLPDELLVHVLSSLETKQAASTSVLSKRWRTLFAVRRNLDFDDS. LRR repeat units follow at residues 117–141, 143–165, 190–213, 228–251, 290–313, and 421–443; these read VSEL…VFRS, TLVK…TCLP, CPAL…VSSK, FDWF…TYAR, VRNV…CKGG, and IVDS…SSRL.

The polypeptide is Putative F-box/LRR-repeat protein At3g44810 (Arabidopsis thaliana (Mouse-ear cress)).